Reading from the N-terminus, the 393-residue chain is Putative amino-acid ABC transporter permease protein YhdX (393 aa).

8 consecutive transmembrane segments (helical) span residues Ala21–His41, Leu92–Ala112, Ile128–Leu148, Asp180–Phe200, Ile219–Leu239, Val256–Ile276, Ser333–Leu353, and Ile363–Ile383. The ABC transmembrane type-1 domain occupies Leu88–Met381.

This sequence belongs to the binding-protein-dependent transport system permease family. HisMQ subfamily.

The protein localises to the cell inner membrane. Probably part of the binding-protein-dependent transport system YdhWXYZ for an amino acid; probably responsible for the translocation of the substrate across the membrane. The protein is Putative amino-acid ABC transporter permease protein YhdX (yhdX) of Escherichia coli (strain K12).